Here is a 230-residue protein sequence, read N- to C-terminus: Heptaprenylglyceryl phosphate synthase (230 aa).

Residue Lys-12 coordinates sn-glycerol 1-phosphate. Mg(2+)-binding residues include Asp-14 and Thr-40. Sn-glycerol 1-phosphate contacts are provided by residues 159–164, Gly-189, and 209–210; these read YIEYSG and GD.

This sequence belongs to the GGGP/HepGP synthase family. Group I subfamily. In terms of assembly, homodimer. Requires Mg(2+) as cofactor.

It carries out the reaction sn-glycerol 1-phosphate + all-trans-heptaprenyl diphosphate = 3-heptaprenyl-sn-glycero-1-phosphate + diphosphate. The protein operates within membrane lipid metabolism; glycerophospholipid metabolism. Its function is as follows. Prenyltransferase that catalyzes in vivo the transfer of the heptaprenyl moiety of heptaprenyl pyrophosphate (HepPP; 35 carbon atoms) to the C3 hydroxyl of sn-glycerol-1-phosphate (G1P), producing heptaprenylglyceryl phosphate (HepGP). This reaction is an ether-bond-formation step in the biosynthesis of archaea-type G1P-based membrane lipids found in Bacillales. The protein is Heptaprenylglyceryl phosphate synthase of Staphylococcus aureus (strain JH1).